The sequence spans 180 residues: ADP-ribosylation factor-like protein 1 (180 aa).

Gly2 carries the N-myristoyl glycine lipid modification. GTP is bound by residues 23 to 30, 66 to 70, and 125 to 128; these read GLDGAGKT, DLGGQ, and NKQD.

Belongs to the small GTPase superfamily. Arf family.

In terms of biological role, GTP-binding protein involved in protein trafficking; may modulate vesicle budding and uncoating within the Golgi apparatus. The chain is ADP-ribosylation factor-like protein 1 (Arl1) from Drosophila melanogaster (Fruit fly).